Here is a 273-residue protein sequence, read N- to C-terminus: Dermonecrotic toxin LsaSicTox-alphaIB1avi (273 aa).

Residue His-5 is part of the active site. 2 residues coordinate Mg(2+): Glu-25 and Asp-27. His-41 acts as the Nucleophile in catalysis. 2 disulfide bridges follow: Cys-45–Cys-51 and Cys-47–Cys-190. A Mg(2+)-binding site is contributed by Asp-85.

The protein belongs to the arthropod phospholipase D family. Class II subfamily. It depends on Mg(2+) as a cofactor. As to expression, expressed by the venom gland.

Its subcellular location is the secreted. It catalyses the reaction an N-(acyl)-sphingosylphosphocholine = an N-(acyl)-sphingosyl-1,3-cyclic phosphate + choline. The catalysed reaction is an N-(acyl)-sphingosylphosphoethanolamine = an N-(acyl)-sphingosyl-1,3-cyclic phosphate + ethanolamine. It carries out the reaction a 1-acyl-sn-glycero-3-phosphocholine = a 1-acyl-sn-glycero-2,3-cyclic phosphate + choline. The enzyme catalyses a 1-acyl-sn-glycero-3-phosphoethanolamine = a 1-acyl-sn-glycero-2,3-cyclic phosphate + ethanolamine. Functionally, dermonecrotic toxins cleave the phosphodiester linkage between the phosphate and headgroup of certain phospholipids (sphingolipid and lysolipid substrates), forming an alcohol (often choline) and a cyclic phosphate. This toxin acts on sphingomyelin (SM). It may also act on ceramide phosphoethanolamine (CPE), lysophosphatidylcholine (LPC) and lysophosphatidylethanolamine (LPE), but not on lysophosphatidylserine (LPS), and lysophosphatidylglycerol (LPG). It acts by transphosphatidylation, releasing exclusively cyclic phosphate products as second products. Induces dermonecrosis, hemolysis, increased vascular permeability, edema, inflammatory response, and platelet aggregation. The protein is Dermonecrotic toxin LsaSicTox-alphaIB1avi of Loxosceles sabina (Tucson recluse spider).